Consider the following 331-residue polypeptide: Phosphate acyltransferase (331 aa).

The protein belongs to the PlsX family. As to quaternary structure, homodimer. Probably interacts with PlsY.

It localises to the cytoplasm. The enzyme catalyses a fatty acyl-[ACP] + phosphate = an acyl phosphate + holo-[ACP]. The protein operates within lipid metabolism; phospholipid metabolism. In terms of biological role, catalyzes the reversible formation of acyl-phosphate (acyl-PO(4)) from acyl-[acyl-carrier-protein] (acyl-ACP). This enzyme utilizes acyl-ACP as fatty acyl donor, but not acyl-CoA. This is Phosphate acyltransferase from Mesoplasma florum (strain ATCC 33453 / NBRC 100688 / NCTC 11704 / L1) (Acholeplasma florum).